A 213-amino-acid polypeptide reads, in one-letter code: Putative glutathione-dependent formaldehyde-activating enzyme (213 aa).

One can recognise a CENP-V/GFA domain in the interval 19–165; the sequence is FPGGTLKCLC…FRELGLETYD (147 aa). Zn(2+) is bound by residues cysteine 26, cysteine 28, cysteine 47, cysteine 49, cysteine 52, cysteine 94, and cysteine 97.

It belongs to the Gfa family. Zn(2+) serves as cofactor.

The enzyme catalyses S-(hydroxymethyl)glutathione = glutathione + formaldehyde. Its pathway is one-carbon metabolism; formaldehyde degradation; formate from formaldehyde (glutathione route): step 1/3. In terms of biological role, catalyzes the condensation of formaldehyde and glutathione to S-hydroxymethylglutathione. In Podospora anserina (strain S / ATCC MYA-4624 / DSM 980 / FGSC 10383) (Pleurage anserina), this protein is Putative glutathione-dependent formaldehyde-activating enzyme.